Reading from the N-terminus, the 492-residue chain is Histone-lysine N-methyltransferase PRDM7 (492 aa).

Positions 1-22 (MSPERSQEESPEGDTERTERKP) are disordered. The 64-residue stretch at 23-86 (MVKDAFKDIS…RRQAIKLQVD (64 aa)) folds into the KRAB-related domain. Residues 111 to 179 (EQSKHQKGMP…ELRRKETEGK (69 aa)) are disordered. The span at 135–150 (GTPNLLNTSDSEQAQK) shows a compositional bias: polar residues. Over residues 167–179 (LKLELRRKETEGK) the composition is skewed to basic and acidic residues. Positions 244 to 358 (PGLRIGPSGI…PGCELLVWSG (115 aa)) constitute an SET domain.

The protein resides in the nucleus. The protein localises to the chromosome. It carries out the reaction N(6),N(6)-dimethyl-L-lysyl(4)-[histone H3] + S-adenosyl-L-methionine = N(6),N(6),N(6)-trimethyl-L-lysyl(4)-[histone H3] + S-adenosyl-L-homocysteine + H(+). Functionally, histone methyltransferase that selectively methylates 'Lys-4' of dimethylated histone H3 (H3K4me2) to produce trimethylated 'Lys-4' histone H3 (H3K4me3). May play a role in epigenetic regulation of gene expression by defining an active chromatin state. This Homo sapiens (Human) protein is Histone-lysine N-methyltransferase PRDM7.